Here is a 122-residue protein sequence, read N- to C-terminus: Large ribosomal subunit protein uL14 (122 aa).

It belongs to the universal ribosomal protein uL14 family. As to quaternary structure, part of the 50S ribosomal subunit. Forms a cluster with proteins L3 and L19. In the 70S ribosome, L14 and L19 interact and together make contacts with the 16S rRNA in bridges B5 and B8.

Its function is as follows. Binds to 23S rRNA. Forms part of two intersubunit bridges in the 70S ribosome. This is Large ribosomal subunit protein uL14 from Pseudomonas paraeruginosa (strain DSM 24068 / PA7) (Pseudomonas aeruginosa (strain PA7)).